A 353-amino-acid chain; its full sequence is Putative glutamine synthetase (353 aa).

Positions 19-102 (SIIEYVWIGG…VICDTYDVNG (84 aa)) constitute a GS beta-grasp domain. One can recognise a GS catalytic domain in the interval 109–353 (HRHNANIIFE…IILQTVCESD (245 aa)).

This sequence belongs to the glutamine synthetase family.

The enzyme catalyses L-glutamate + NH4(+) + ATP = L-glutamine + ADP + phosphate + H(+). The sequence is that of Putative glutamine synthetase from Acanthamoeba polyphaga (Amoeba).